The sequence spans 351 residues: MAANTTSPAAPSSPGGMSLSLLPIVLLSVALAVGLPGNSFVVWSILKRMQKRTVTALLVLNLALADLAVLLTAPFFLHFLARGTWSFREMGCRLCHYVCGISMYASVLLITIMSLDRSLAVARPFMSQKVRTKAFARWVLAGIWVVSFLLAIPVLVYRTVKWNNRTLICAPNYPNKEHKVFHLLFEAITGFLLPFLAVVASYSDIGRRLQARRFRRSRRTGRLVVLIILAFAAFWLPYHLVNLVEAGRTVAGWDKNSPAGQRLRLARYVLIALAFLSSSVNPVLYACAGGGLLRSAGVGFVVKLLEGTGSEVSSTRRGGTLVQTPKDTPACPEPGPTDSFMTSSTIPESSK.

Residues 1–21 (MAANTTSPAAPSSPGGMSLSL) lie on the Extracellular side of the membrane. Asn4 carries N-linked (GlcNAc...) asparagine glycosylation. Residues 22-44 (LPIVLLSVALAVGLPGNSFVVWS) traverse the membrane as a helical segment. Topologically, residues 45–56 (ILKRMQKRTVTA) are cytoplasmic. A helical transmembrane segment spans residues 57–77 (LLVLNLALADLAVLLTAPFFL). Topologically, residues 78-93 (HFLARGTWSFREMGCR) are extracellular. A helical membrane pass occupies residues 94-115 (LCHYVCGISMYASVLLITIMSL). Over 116–140 (DRSLAVARPFMSQKVRTKAFARWVL) the chain is Cytoplasmic. A helical transmembrane segment spans residues 141–161 (AGIWVVSFLLAIPVLVYRTVK). Residues 162–179 (WNNRTLICAPNYPNKEHK) lie on the Extracellular side of the membrane. N-linked (GlcNAc...) asparagine glycosylation occurs at Asn164. A helical membrane pass occupies residues 180-200 (VFHLLFEAITGFLLPFLAVVA). At 201-222 (SYSDIGRRLQARRFRRSRRTGR) the chain is on the cytoplasmic side. A helical transmembrane segment spans residues 223–243 (LVVLIILAFAAFWLPYHLVNL). Residues 244-268 (VEAGRTVAGWDKNSPAGQRLRLARY) lie on the Extracellular side of the membrane. Residues 269-289 (VLIALAFLSSSVNPVLYACAG) traverse the membrane as a helical segment. At 290 to 351 (GGLLRSAGVG…TSSTIPESSK (62 aa)) the chain is on the cytoplasmic side. 2 stretches are compositionally biased toward polar residues: residues 311-326 (EVSS…QTPK) and 339-351 (SFMT…ESSK). The tract at residues 311 to 351 (EVSSTRRGGTLVQTPKDTPACPEPGPTDSFMTSSTIPESSK) is disordered.

Belongs to the G-protein coupled receptor 1 family. Post-translationally, phosphorylated by GRK6 upon leukotriene B4 binding; which promotes desensitization. As to expression, highly expressed on activated leukocytes, including eosinophils.

It localises to the cell membrane. Receptor for leukotriene B4, a potent chemoattractant involved in inflammation and immune response. The protein is Leukotriene B4 receptor 1 (Ltb4r) of Mus musculus (Mouse).